The primary structure comprises 1145 residues: DNA polymerase II large subunit (1145 aa).

Residues Lys-284–Pro-303 form a disordered region.

Belongs to the archaeal DNA polymerase II family. As to quaternary structure, heterodimer of a large subunit and a small subunit.

The catalysed reaction is DNA(n) + a 2'-deoxyribonucleoside 5'-triphosphate = DNA(n+1) + diphosphate. It carries out the reaction Exonucleolytic cleavage in the 3'- to 5'-direction to yield nucleoside 5'-phosphates.. Its function is as follows. Possesses two activities: a DNA synthesis (polymerase) and an exonucleolytic activity that degrades single-stranded DNA in the 3'- to 5'-direction. Has a template-primer preference which is characteristic of a replicative DNA polymerase. In Methanococcoides burtonii (strain DSM 6242 / NBRC 107633 / OCM 468 / ACE-M), this protein is DNA polymerase II large subunit.